A 309-amino-acid chain; its full sequence is Short-chain dehydrogenase/reductase ARMGADRAFT_1048226 (309 aa).

NADP(+)-binding residues include Lys-64, Asp-86, Asn-113, and Lys-145. Ser-167 (proton donor) is an active-site residue. 2 residues coordinate NADP(+): Tyr-196 and Lys-200. Tyr-196 serves as the catalytic Proton acceptor. Lys-200 (lowers pKa of active site Tyr) is an active-site residue.

The protein belongs to the short-chain dehydrogenases/reductases (SDR) family.

The protein operates within secondary metabolite biosynthesis. Short-chain dehydrogenase/reductase, part of the gene cluster that mediates the biosynthesis of melleolides, a range of antifungal and phytotoxic polyketide derivatives composed of an orsellinic acid (OA) moiety esterified to various sesquiterpene alcohols. The first step in melleolides biosynthesis is performed by the delta(6)-protoilludene synthase PRO1 which catalyzes the cyclization of farnesyl diphosphate to protoilludene. The orsellinic acid synthase armB produces OA by condensing acetyl-CoA with 3 malonyl-CoA units in a three-round chain elongation reaction folowed by a C2-C7 ring closure. ArmB further catalyzes the trans-esterification of OA to the various sesquiterpene alcohols resulting from the hydroxylation of protoilludene. The melleolides cluster also includes 5 cytochrome P450 monooxygenases, 4 NAD(+)-dependent oxidoreductases, one flavin-dependent oxidoreductase, and one O-methyltransferase. The cytochrome P450 monooxygenases may be involved in protoilludene hydroxylation to elaborate melleolides with multiple alcohol groups, such as melleolide D, which carries alcohol functionalities at C-4, C-5, C-10, and C-13. The role of the NAD(+)-dependent enzymes remains unknown. Numerous melleolides, including arnamial, show 5'-O-methylation of the aromatic moiety which may be catalyzed by the methyltransferase encoded in the cluster. The flavin-dependent oxidoreductase might represent the dehydrogenase yielding the aldehyde in position 1 of arnamial and other melleolides. Finally, several halogenase localized outside of the cluster, are able to catalyze the transfer of a single chlorine atom to the melleolide backbone, resulting in a 6'-chloromelleolide product. The protein is Short-chain dehydrogenase/reductase ARMGADRAFT_1048226 of Armillaria gallica (Bulbous honey fungus).